A 144-amino-acid chain; its full sequence is Large ribosomal subunit protein uL16 (144 aa).

The protein belongs to the universal ribosomal protein uL16 family. Part of the 50S ribosomal subunit.

Binds 23S rRNA and is also seen to make contacts with the A and possibly P site tRNAs. The sequence is that of Large ribosomal subunit protein uL16 from Erythrobacter litoralis (strain HTCC2594).